We begin with the raw amino-acid sequence, 261 residues long: Homeobox protein ceh-33 (261 aa).

A DNA-binding region (homeobox) is located at residues 133–192 (GEETSYCFRDKSRVLLRDWYCRNSYPSPREKRELAEKTHLTVTQVSNWFKNRRQRDRAGV).

It belongs to the SIX/Sine oculis homeobox family.

It localises to the nucleus. The chain is Homeobox protein ceh-33 (ceh-33) from Caenorhabditis elegans.